Consider the following 114-residue polypeptide: Ribulose bisphosphate carboxylase small subunit 2 (114 aa).

Belongs to the RuBisCO small chain family. In terms of assembly, heterohexadecamer of 8 large and 8 small subunits. Forms a CsoS2-CsoS1-RuBisCO complex.

It is found in the carboxysome. In terms of biological role, ruBisCO catalyzes two reactions: the carboxylation of D-ribulose 1,5-bisphosphate, the primary event in carbon dioxide fixation, as well as the oxidative fragmentation of the pentose substrate. Both reactions occur simultaneously and in competition at the same active site. Although the small subunit is not catalytic it is essential for maximal activity. Replacing the endogenous type I ccbLS genes in H.neapolitanus with this carboxysomally targeted enzyme reconstitutes RuBisCO with about 25% of normal activity; the active enzyme is targeted to carboxysomes. This is Ribulose bisphosphate carboxylase small subunit 2 from Hydrogenovibrio crunogenus (strain DSM 25203 / XCL-2) (Thiomicrospira crunogena).